The chain runs to 160 residues: Cytochrome b6-f complex subunit 4 (160 aa).

3 consecutive transmembrane segments (helical) span residues 36–56 (LLYIFPVVIFGTIACNVGLAV), 95–115 (LLGVLLMAAVPAGLLTVPFLE), and 131–151 (TVFLIGTVVSIWLGIGAAMPI).

This sequence belongs to the cytochrome b family. PetD subfamily. In terms of assembly, the 4 large subunits of the cytochrome b6-f complex are cytochrome b6, subunit IV (17 kDa polypeptide, petD), cytochrome f and the Rieske protein, while the 4 small subunits are petG, petL, petM and petN. The complex functions as a dimer.

The protein localises to the plastid. It is found in the chloroplast thylakoid membrane. Its function is as follows. Component of the cytochrome b6-f complex, which mediates electron transfer between photosystem II (PSII) and photosystem I (PSI), cyclic electron flow around PSI, and state transitions. This is Cytochrome b6-f complex subunit 4 from Zygnema circumcarinatum (Green alga).